Consider the following 575-residue polypeptide: MSQDGKVKTTESTPPAPTKARKWLPVLDPSGDYYYWWLNTMVFPIMYNLIIVVCRACFPDLQHSYLVAWFVLDYTSDLLYLLDIGVRFHTGFLEQGILVVDKGMIASRYVRTWSFLLDLASLVPTDAAYVQLGPHIPTLRLNRFLRVPRLFEAFDRTETRTAYPNAFRIAKLMLYIFVVIHWNSCLYFALSRYLGFGRDAWVYPDPAQPGFERLRRQYLYSFYFSTLILTTVGDTPLPDREEEYLFMVGDFLLAVMGFATIMGSMSSVIYNMNTADAAFYPDHALVKKYMKLQHVNKRLERRVIDWYQHLQINKKMTNEVAILQHLPERLRAEVAVSVHLSTLSRVQIFQNCEASLLEELVLKLQPQTYSPGEYVCRKGDIGREMYIIREGQLAVVADDGVTQYAVLGAGLYFGEISIINIKGNMSGNRRTANIKSLGYSDLFCLSKEDLREVLSEYPQAQAVMEEKGREILLKMNKLDVNAEAAEIALQEATESRLKGLDQQLDDLQTKFARLLAELESSALKIAYRIERLEWQTREWPMPEDMGEADDEAEPGEGTSKDGEGKAGQAGPSGIE.

Residues methionine 1–leucine 38 lie on the Cytoplasmic side of the membrane. A helical transmembrane segment spans residues asparagine 39–aspartate 60. Residues leucine 61 to phenylalanine 70 are Extracellular-facing. Residues valine 71–glycine 91 traverse the membrane as a helical segment. At phenylalanine 92–leucine 116 the chain is on the cytoplasmic side. A helical transmembrane segment spans residues leucine 117–histidine 135. The Extracellular segment spans residues isoleucine 136–arginine 140. A helical membrane pass occupies residues leucine 141 to threonine 159. Residues arginine 160 to alanine 166 lie on the Cytoplasmic side of the membrane. Residues proline 164–methionine 272 are ion conduction pathway. The helical transmembrane segment at phenylalanine 167–leucine 190 threads the bilayer. Residues serine 191–arginine 213 are Extracellular-facing. 2 helical membrane passes run leucine 214–valine 248 and glycine 249–asparagine 273. The interval threonine 231–aspartate 234 is selectivity filter. Residues threonine 274 to glutamine 350 are C-linker. Residues threonine 274–glutamate 575 lie on the Cytoplasmic side of the membrane. Residues leucine 292–arginine 302 carry the IQ-type motif. Isoleucine 348–isoleucine 471 contributes to the a nucleoside 3',5'-cyclic phosphate binding site. Residues alanine 354–lysine 474 form a cyclic nucleotide-binding domain region. 3',5'-cyclic GMP-binding residues include glycine 414, serine 417, arginine 430, and threonine 431. 3',5'-cyclic AMP is bound by residues arginine 430 and threonine 431. Positions threonine 493 to glutamate 547 form a coiled coil. The segment at arginine 537–glutamate 575 is disordered. Acidic residues predominate over residues aspartate 544–proline 554.

Belongs to the cyclic nucleotide-gated cation channel (TC 1.A.1.5) family. CNGA4 subfamily. In terms of assembly, the olfactory cyclic nucleotide-gated channel is an heterotetramer composed of CNGA2, CNGA4 and CNGB1b subunits with 2:1:1 stoichiometry. May form homomeric channels gated by nitric oxide. Post-translationally, N-glycosylated. Olfactory neurons. Expressed in olfactory sensory cilia (at protein level).

It localises to the cell projection. The protein resides in the cilium membrane. The catalysed reaction is Ca(2+)(in) = Ca(2+)(out). It carries out the reaction Na(+)(in) = Na(+)(out). It catalyses the reaction K(+)(in) = K(+)(out). The enzyme catalyses NH4(+)(in) = NH4(+)(out). The catalysed reaction is Rb(+)(in) = Rb(+)(out). It carries out the reaction Li(+)(in) = Li(+)(out). It catalyses the reaction Cs(+)(in) = Cs(+)(out). Its activity is regulated as follows. Ca(2+)-calmodulin exerts its inhibitory effect in cAMP sensitivity by binding to IQ-like motif of CNGA4 and preferably binds to the channel in the closed state. Inhibition by PIP3 of the CNG channel probably occurs via CGNA2 binding. Ca(2+) currents are inhibited by pimozide, an L-type Ca(2+) channel blocker. Its function is as follows. Pore-forming subunit of the olfactory cyclic nucleotide-gated channel. Operates in the cilia of olfactory sensory neurons where chemical stimulation of the odorant is converted to an electrical signal. Mediates odorant-induced cAMP-dependent Ca(2+) influx triggering neuron depolarization. The rise of intracellular Ca(2+) levels potentiates the olfactory response by activating Ca(2+)-dependent Cl(-) channels, but it also serves as a negative feedback signal to desensitize the channel for rapid adaptation to odorants. Conducts cAMP- and cGMP-gated ion currents, with permeability for monovalent and divalent cations. May conduct nitric oxide-gated Ca(2+) currents relevant to neurons of vomeronasal organ, a system involved in the perception of pheromones. This chain is Cyclic nucleotide-gated channel alpha-4, found in Rattus norvegicus (Rat).